The following is a 178-amino-acid chain: ATP synthase subunit delta (178 aa).

The protein belongs to the ATPase delta chain family. F-type ATPases have 2 components, F(1) - the catalytic core - and F(0) - the membrane proton channel. F(1) has five subunits: alpha(3), beta(3), gamma(1), delta(1), epsilon(1). F(0) has three main subunits: a(1), b(2) and c(10-14). The alpha and beta chains form an alternating ring which encloses part of the gamma chain. F(1) is attached to F(0) by a central stalk formed by the gamma and epsilon chains, while a peripheral stalk is formed by the delta and b chains.

The protein localises to the cell membrane. In terms of biological role, f(1)F(0) ATP synthase produces ATP from ADP in the presence of a proton or sodium gradient. F-type ATPases consist of two structural domains, F(1) containing the extramembraneous catalytic core and F(0) containing the membrane proton channel, linked together by a central stalk and a peripheral stalk. During catalysis, ATP synthesis in the catalytic domain of F(1) is coupled via a rotary mechanism of the central stalk subunits to proton translocation. This protein is part of the stalk that links CF(0) to CF(1). It either transmits conformational changes from CF(0) to CF(1) or is implicated in proton conduction. The sequence is that of ATP synthase subunit delta from Streptococcus gordonii (strain Challis / ATCC 35105 / BCRC 15272 / CH1 / DL1 / V288).